A 797-amino-acid chain; its full sequence is Protocadherin beta-9 (797 aa).

The N-terminal stretch at 1–26 is a signal peptide; it reads MKTRGFSFPRQRQVLFLFLFWGVSLA. The Extracellular portion of the chain corresponds to 27 to 690; that stretch reads GSGFGRYSVT…AQADSLTVYL (664 aa). Cadherin domains lie at 35-133, 138-242, 247-347, 352-451, and 456-561; these read VTEE…SPVF, MVLK…APQF, YETQ…PPEL, LSNS…APAF, and YTLF…SPFV. N-linked (GlcNAc...) asparagine glycosylation is present at N169. N418 carries an N-linked (GlcNAc...) asparagine glycan. N567 carries an N-linked (GlcNAc...) asparagine glycan. One can recognise a Cadherin 6 domain in the interval 568 to 671; it reads GSAPCTELVP…LVDGFSQPYL (104 aa). Residues 691 to 711 form a helical membrane-spanning segment; the sequence is VVALASVSSLFLLSVLLFVAV. The Cytoplasmic segment spans residues 712 to 797; it reads RLCRRSRAAS…TLHNSFGFNY (86 aa).

It localises to the cell membrane. In terms of biological role, potential calcium-dependent cell-adhesion protein. May be involved in the establishment and maintenance of specific neuronal connections in the brain. This Pan troglodytes (Chimpanzee) protein is Protocadherin beta-9 (PCDHB9).